We begin with the raw amino-acid sequence, 296 residues long: Lipoyl synthase (296 aa).

Cys-35, Cys-40, Cys-46, Cys-61, Cys-65, Cys-68, and Ser-274 together coordinate [4Fe-4S] cluster. Positions 47-263 (WSSKHVTVMI…KEAAYARGFL (217 aa)) constitute a Radical SAM core domain.

The protein belongs to the radical SAM superfamily. Lipoyl synthase family. [4Fe-4S] cluster is required as a cofactor.

It is found in the cytoplasm. The enzyme catalyses [[Fe-S] cluster scaffold protein carrying a second [4Fe-4S](2+) cluster] + N(6)-octanoyl-L-lysyl-[protein] + 2 oxidized [2Fe-2S]-[ferredoxin] + 2 S-adenosyl-L-methionine + 4 H(+) = [[Fe-S] cluster scaffold protein] + N(6)-[(R)-dihydrolipoyl]-L-lysyl-[protein] + 4 Fe(3+) + 2 hydrogen sulfide + 2 5'-deoxyadenosine + 2 L-methionine + 2 reduced [2Fe-2S]-[ferredoxin]. Its pathway is protein modification; protein lipoylation via endogenous pathway; protein N(6)-(lipoyl)lysine from octanoyl-[acyl-carrier-protein]: step 2/2. In terms of biological role, catalyzes the radical-mediated insertion of two sulfur atoms into the C-6 and C-8 positions of the octanoyl moiety bound to the lipoyl domains of lipoate-dependent enzymes, thereby converting the octanoylated domains into lipoylated derivatives. This chain is Lipoyl synthase, found in Neorickettsia sennetsu (strain ATCC VR-367 / Miyayama) (Ehrlichia sennetsu).